We begin with the raw amino-acid sequence, 188 residues long: Probable manganese efflux pump MntP (188 aa).

The next 5 helical transmembrane spans lie at 3 to 23 (ITAT…ASIG), 66 to 86 (LEWN…RMII), 106 to 128 (WLLV…GLAF), 143 to 163 (ATLI…SIIG), and 168 to 188 (ILGG…HFHG).

Belongs to the MntP (TC 9.B.29) family.

It localises to the cell inner membrane. Functionally, probably functions as a manganese efflux pump. In Shigella flexneri serotype 5b (strain 8401), this protein is Probable manganese efflux pump MntP.